Reading from the N-terminus, the 340-residue chain is Glycerol-3-phosphate dehydrogenase [NAD(P)+] (340 aa).

Positions 11, 12, 33, and 106 each coordinate NADPH. Lys106, Gly137, and Ser139 together coordinate sn-glycerol 3-phosphate. Ala141 contributes to the NADPH binding site. Residues Lys192, Asp245, Ser255, Arg256, and Asn257 each contribute to the sn-glycerol 3-phosphate site. The active-site Proton acceptor is the Lys192. An NADPH-binding site is contributed by Arg256. Positions 280 and 282 each coordinate NADPH.

It belongs to the NAD-dependent glycerol-3-phosphate dehydrogenase family.

Its subcellular location is the cytoplasm. The catalysed reaction is sn-glycerol 3-phosphate + NAD(+) = dihydroxyacetone phosphate + NADH + H(+). The enzyme catalyses sn-glycerol 3-phosphate + NADP(+) = dihydroxyacetone phosphate + NADPH + H(+). It functions in the pathway membrane lipid metabolism; glycerophospholipid metabolism. Functionally, catalyzes the reduction of the glycolytic intermediate dihydroxyacetone phosphate (DHAP) to sn-glycerol 3-phosphate (G3P), the key precursor for phospholipid synthesis. This Bacillus cereus (strain G9842) protein is Glycerol-3-phosphate dehydrogenase [NAD(P)+].